A 178-amino-acid chain; its full sequence is Large ribosomal subunit protein uL6 (178 aa).

It belongs to the universal ribosomal protein uL6 family. Part of the 50S ribosomal subunit.

This protein binds to the 23S rRNA, and is important in its secondary structure. It is located near the subunit interface in the base of the L7/L12 stalk, and near the tRNA binding site of the peptidyltransferase center. The protein is Large ribosomal subunit protein uL6 of Natranaerobius thermophilus (strain ATCC BAA-1301 / DSM 18059 / JW/NM-WN-LF).